A 208-amino-acid polypeptide reads, in one-letter code: Large ribosomal subunit protein uL3 (208 aa).

At glutamine 149 the chain carries N5-methylglutamine.

It belongs to the universal ribosomal protein uL3 family. Part of the 50S ribosomal subunit. Forms a cluster with proteins L14 and L19. Methylated by PrmB.

In terms of biological role, one of the primary rRNA binding proteins, it binds directly near the 3'-end of the 23S rRNA, where it nucleates assembly of the 50S subunit. The chain is Large ribosomal subunit protein uL3 from Actinobacillus succinogenes (strain ATCC 55618 / DSM 22257 / CCUG 43843 / 130Z).